A 1146-amino-acid polypeptide reads, in one-letter code: Activator of SKN7 protein 10 (1146 aa).

Residues 1–15 show a composition bias toward polar residues; that stretch reads MSDYFSSRPSQTLTP. Disordered stretches follow at residues 1 to 32 and 171 to 194; these read MSDY…ASSI and ITDP…KVGL. Ser344 bears the Phosphoserine mark. One can recognise a PH domain in the interval 482-606; it reads CIKAGYFLKK…DCTLKDASST (125 aa). The tract at residues 553–575 is disordered; the sequence is NNHHRQASDVHNSSTTTGGTAGA. Residues 564–575 show a composition bias toward low complexity; sequence NSSTTTGGTAGA. Ser793 is subject to Phosphoserine. Thr808 bears the Phosphothreonine mark. Disordered stretches follow at residues 835–854 and 909–982; these read MATS…PQSM and PVNS…TAMR. Low complexity predominate over residues 912–924; sequence SPGSSNSESSSGG. A compositionally biased stretch (polar residues) spans 939–950; the sequence is YTQRNSEGSSPC. Position 944 is a phosphoserine (Ser944). Positions 958–968 are enriched in low complexity; sequence QQQQPLQMQPL. Ser969 carries the post-translational modification Phosphoserine. Residues 969–982 show a composition bias toward polar residues; it reads SRTSSSSVNVTAMR. Residue Thr1017 is modified to Phosphothreonine. Phosphoserine occurs at positions 1070, 1095, and 1098. The interval 1124–1146 is disordered; sequence GIQEDDGDSTNNDTIKLNQSIYS. Over residues 1132 to 1146 the composition is skewed to polar residues; sequence STNNDTIKLNQSIYS.

The protein belongs to the RGC1 family. As to quaternary structure, component of the RNA polymerase II holoenzyme. Interacts with RPO21 and SSN8. In terms of processing, phosphorylated in response to various stresses. stress-induced phosphorylation is partially dependent on HOG1.

The protein localises to the cytoplasm. Its function is as follows. Positive regulator of FPS1 glycerol channel required for the glycerol efflux. As a component of the RNA polymerase II holoenzyme, is required for SSN8 destruction in response to oxidative stress but not heat shock. Required for cell survival in response to heat shock independent of SSN8. This chain is Activator of SKN7 protein 10 (ASK10), found in Saccharomyces cerevisiae (strain ATCC 204508 / S288c) (Baker's yeast).